We begin with the raw amino-acid sequence, 377 residues long: Leukocyte elastase inhibitor (377 aa).

Position 1 is an N-acetylmethionine (Met-1). Residue Lys-136 is modified to N6-acetyllysine. Residue Ser-298 is modified to Phosphoserine. The CARD-binding motif (CBM) stretch occupies residues 349 to 377; the sequence is EFVADHPFIFFIRHKPSSNILFLGRLSSP.

Belongs to the serpin family. Ov-serpin subfamily. As to quaternary structure, monomer. Interacts (via C-terminus) with CASP1; CASP4 (via CARD domain) and CASP5; these interactions regulate the activity of inflammatory caspases. Interacts with PRTN3. Interacts with GZMH.

The protein localises to the secreted. It is found in the cytoplasm. Its subcellular location is the cytolytic granule. It localises to the early endosome. In terms of biological role, neutrophil serine protease inhibitor that plays an essential role in the regulation of the innate immune response, inflammation and cellular homeostasis. Acts primarily to protect the cell from proteases released in the cytoplasm during stress or infection. These proteases are important in killing microbes but when released from granules, these potent enzymes also destroy host proteins and contribute to mortality. Regulates the activity of the neutrophil proteases elastase, cathepsin G, proteinase-3, chymase, chymotrypsin, and kallikrein-3. Also acts as a potent intracellular inhibitor of GZMH by directly blocking its proteolytic activity. During inflammation, limits the activity of inflammatory caspases CASP1, CASP4 and CASP5 by suppressing their caspase-recruitment domain (CARD) oligomerization and enzymatic activation. When secreted, promotes the proliferation of beta-cells via its protease inhibitory function. This chain is Leukocyte elastase inhibitor (SERPINB1), found in Bos taurus (Bovine).